Reading from the N-terminus, the 643-residue chain is Alpha-dioxygenase PIOX (643 aa).

The active-site Proton acceptor is histidine 168. A Ca(2+)-binding site is contributed by aspartate 169. Histidine 173 provides a ligand contact to heme b. Residues threonine 221, tryptophan 223, aspartate 225, and serine 227 each coordinate Ca(2+). Heme b contacts are provided by histidine 393, arginine 490, and arginine 494.

It belongs to the peroxidase family. Requires heme b as cofactor. The cofactor is Ca(2+).

It carries out the reaction hexadecanoate + O2 = (2R)-2-hydroperoxyhexadecanoate. It catalyses the reaction dodecanoate + O2 = (2R)-2-hydroperoxydodecanoate. Alpha-dioxygenase that catalyzes the primary oxygenation step of a variety of 14-20 carbon fatty acids, containing up to three unsaturated bonds, into their corresponding 2R-hydroperoxides. Involved in the production of oxylipins that function in cell signaling, wound healing, and protection from infection. The alpha-oxidation pathway of fatty acids may play a role during plant developmental processes. The protein is Alpha-dioxygenase PIOX of Pisum sativum (Garden pea).